Here is a 1043-residue protein sequence, read N- to C-terminus: Isoleucine--tRNA ligase (1043 aa).

The 'HIGH' region signature appears at 48-58 (PFATGLPHYGH). The short motif at 591 to 595 (KMSKR) is the 'KMSKS' region element. Residue Lys-594 participates in ATP binding.

The protein belongs to the class-I aminoacyl-tRNA synthetase family. IleS type 2 subfamily. Monomer. Zn(2+) serves as cofactor.

The protein localises to the cytoplasm. It carries out the reaction tRNA(Ile) + L-isoleucine + ATP = L-isoleucyl-tRNA(Ile) + AMP + diphosphate. Catalyzes the attachment of isoleucine to tRNA(Ile). As IleRS can inadvertently accommodate and process structurally similar amino acids such as valine, to avoid such errors it has two additional distinct tRNA(Ile)-dependent editing activities. One activity is designated as 'pretransfer' editing and involves the hydrolysis of activated Val-AMP. The other activity is designated 'posttransfer' editing and involves deacylation of mischarged Val-tRNA(Ile). This chain is Isoleucine--tRNA ligase, found in Chlamydia pneumoniae (Chlamydophila pneumoniae).